A 253-amino-acid chain; its full sequence is PAXIP1-associated glutamate-rich protein 1A (253 aa).

Disordered regions lie at residues 1–108 (MSLA…MPPP) and 126–253 (LQAE…QRKY). Basic and acidic residues predominate over residues 45 to 66 (KAEEEGKGSQEEAGREGSRPEE). Residues 115 to 159 (YELLATQGTLELQAEILPRRPPTPEAQSEEERSDEEPEAKEEEEE) form a sufficient for interaction with NCOA1 region. At threonine 137 the chain carries Phosphothreonine. Residues 141-158 (QSEEERSDEEPEAKEEEE) are compositionally biased toward acidic residues. Serine 142 and serine 147 each carry phosphoserine. Residues 160 to 253 (KPHMPTEFDF…NSLFPRQRKY (94 aa)) form a sufficient for interaction with ESR1 region. Basic and acidic residues predominate over residues 194-222 (QKREARLDKVLSDMKRHKKLEEQILRTGR). Residue serine 236 is modified to Phosphoserine. A compositionally biased stretch (polar residues) spans 238 to 247 (PLRSSGNSLF).

As to quaternary structure, component of the KMT2 family MLL2/MLL3 complex, at least composed of the histone methyltransferases KMT2D and/or KMT2C, the common subunits ASH2L, RBBP5, WDR5 and DPY30, and the complex type-specific subunits PAXIP1/PTIP, PAGR1, NCOA6 and KDM6A; PAXIP1 is required for the association with the MLL2/MLL3 complex. Forms a constitutive complex with PAXIP1/PTIP independently of the MLL2/MLL3 complex. Interacts with NCOA1, ESR1, NR3C1, AR.

It localises to the nucleus. Its association with the histone methyltransferase MLL2/MLL3 complex is suggesting a role in epigenetic transcriptional activation. However, in association with PAXIP1/PTIP is proposed to function at least in part independently of the MLL2/MLL3 complex. Proposed to be recruited by PAXIP1 to sites of DNA damage where the PAGR1:PAXIP1 complex is required for cell survival in response to DNA damage independently of the MLL2/MLL3 complex. However, its function in DNA damage has been questioned. During immunoglobulin class switching in activated B-cells is involved in transcription regulation of downstream switch regions at the immunoglobulin heavy-chain (Igh) locus independently of the MLL2/MLL3 complex. Involved in both estrogen receptor-regulated gene transcription and estrogen-stimulated G1/S cell-cycle transition. Acts as a transcriptional cofactor for nuclear hormone receptors. Inhibits the induction properties of several steroid receptors such as NR3C1, AR and PPARG; the mechanism of inhibition appears to be gene-dependent. May be involved in the regulation of the BMP pathway in extraembryonic development. This is PAXIP1-associated glutamate-rich protein 1A from Mus musculus (Mouse).